Consider the following 631-residue polypeptide: 1-deoxy-D-xylulose-5-phosphate synthase (631 aa).

Thiamine diphosphate contacts are provided by residues histidine 87 and 128-130 (GHS). Aspartate 159 serves as a coordination point for Mg(2+). Thiamine diphosphate-binding positions include 160 to 161 (GA), asparagine 188, phenylalanine 295, and glutamate 377. Position 188 (asparagine 188) interacts with Mg(2+).

The protein belongs to the transketolase family. DXPS subfamily. Homodimer. Requires Mg(2+) as cofactor. Thiamine diphosphate serves as cofactor.

It carries out the reaction D-glyceraldehyde 3-phosphate + pyruvate + H(+) = 1-deoxy-D-xylulose 5-phosphate + CO2. Its pathway is metabolic intermediate biosynthesis; 1-deoxy-D-xylulose 5-phosphate biosynthesis; 1-deoxy-D-xylulose 5-phosphate from D-glyceraldehyde 3-phosphate and pyruvate: step 1/1. Functionally, catalyzes the acyloin condensation reaction between C atoms 2 and 3 of pyruvate and glyceraldehyde 3-phosphate to yield 1-deoxy-D-xylulose-5-phosphate (DXP). The protein is 1-deoxy-D-xylulose-5-phosphate synthase of Pseudomonas putida (strain GB-1).